The chain runs to 205 residues: Ribosomal RNA small subunit methyltransferase G (205 aa).

S-adenosyl-L-methionine-binding positions include glycine 73, leucine 78, 124–125 (VE), and arginine 138.

This sequence belongs to the methyltransferase superfamily. RNA methyltransferase RsmG family.

Its subcellular location is the cytoplasm. It catalyses the reaction guanosine(527) in 16S rRNA + S-adenosyl-L-methionine = N(7)-methylguanosine(527) in 16S rRNA + S-adenosyl-L-homocysteine. Its function is as follows. Specifically methylates the N7 position of guanine in position 527 of 16S rRNA. This is Ribosomal RNA small subunit methyltransferase G from Actinobacillus pleuropneumoniae serotype 5b (strain L20).